The primary structure comprises 175 residues: Nucleoside triphosphate/diphosphate phosphatase (175 aa).

The Proton donor role is filled by Arg23. Residues Asn87, Asp103, Asp105, Asp107, Asp120, and Glu123 each coordinate Mg(2+).

Belongs to the Ntdp family. Mg(2+) is required as a cofactor.

It carries out the reaction a ribonucleoside 5'-triphosphate + H2O = a ribonucleoside 5'-diphosphate + phosphate + H(+). The catalysed reaction is a ribonucleoside 5'-diphosphate + H2O = a ribonucleoside 5'-phosphate + phosphate + H(+). Functionally, has nucleoside phosphatase activity towards nucleoside triphosphates and nucleoside diphosphates. This Oceanobacillus iheyensis (strain DSM 14371 / CIP 107618 / JCM 11309 / KCTC 3954 / HTE831) protein is Nucleoside triphosphate/diphosphate phosphatase.